Here is a 443-residue protein sequence, read N- to C-terminus: Aspartic protease PEP3 (443 aa).

Residues 1–36 (MQNRPRVFDSAMNLSPNMHFLSLMPGLLLLSLQVHT) form the signal peptide. The propeptide at 37–107 (SPTPLKKTIR…NTVSKAMQAN (71 aa)) is activation peptide. In terms of domain architecture, Peptidase A1 spans 123-440 (YLSPVTIGGQ…DLRGPSLHVA (318 aa)). Asp-139 is an active-site residue. N-linked (GlcNAc...) asparagine glycosylation is found at Asn-180 and Asn-293. Asp-327 is a catalytic residue. Cys-363 and Cys-403 are disulfide-bonded. Residues Asn-364 and Asn-388 are each glycosylated (N-linked (GlcNAc...) asparagine).

It belongs to the peptidase A1 family. As to quaternary structure, monomer.

It localises to the secreted. Functionally, secreted aspartic endopeptidase that allows assimilation of proteinaceous substrates. The scissile peptide bond is attacked by a nucleophilic water molecule activated by two aspartic residues in the active site. Shows a broad primary substrate specificity. Favors hydrophobic residues at the P1 and P1' positions. This is Aspartic protease PEP3 from Coccidioides posadasii (strain C735) (Valley fever fungus).